An 85-amino-acid polypeptide reads, in one-letter code: Putative defensin-like protein 79 (85 aa).

Residues 1–31 form the signal peptide; sequence MKSEKSADAYGTYFLLISTIFLLFIARQASS. 4 disulfide bridges follow: Cys-37–Cys-69, Cys-44–Cys-60, Cys-47–Cys-67, and Cys-51–Cys-68.

This sequence belongs to the DEFL family.

The protein localises to the secreted. This chain is Putative defensin-like protein 79, found in Arabidopsis thaliana (Mouse-ear cress).